We begin with the raw amino-acid sequence, 169 residues long: Sec-independent protein translocase protein TatB (169 aa).

The helical transmembrane segment at 2–22 threads the bilayer; it reads SPGIGMPELLVVLVLALVVVG. A disordered region spans residues 106–169; it reads NQAETDADKA…AKPVDEIKGR (64 aa).

Belongs to the TatB family. In terms of assembly, the Tat system comprises two distinct complexes: a TatABC complex, containing multiple copies of TatA, TatB and TatC subunits, and a separate TatA complex, containing only TatA subunits. Substrates initially bind to the TatABC complex, which probably triggers association of the separate TatA complex to form the active translocon.

The protein resides in the cell inner membrane. Part of the twin-arginine translocation (Tat) system that transports large folded proteins containing a characteristic twin-arginine motif in their signal peptide across membranes. Together with TatC, TatB is part of a receptor directly interacting with Tat signal peptides. TatB may form an oligomeric binding site that transiently accommodates folded Tat precursor proteins before their translocation. This chain is Sec-independent protein translocase protein TatB, found in Maricaulis maris (strain MCS10) (Caulobacter maris).